Consider the following 179-residue polypeptide: Large ribosomal subunit protein uL5 (179 aa).

The protein belongs to the universal ribosomal protein uL5 family. In terms of assembly, part of the 50S ribosomal subunit; part of the 5S rRNA/L5/L18/L25 subcomplex. Contacts the 5S rRNA and the P site tRNA. Forms a bridge to the 30S subunit in the 70S ribosome.

Its function is as follows. This is one of the proteins that bind and probably mediate the attachment of the 5S RNA into the large ribosomal subunit, where it forms part of the central protuberance. In the 70S ribosome it contacts protein S13 of the 30S subunit (bridge B1b), connecting the 2 subunits; this bridge is implicated in subunit movement. Contacts the P site tRNA; the 5S rRNA and some of its associated proteins might help stabilize positioning of ribosome-bound tRNAs. The sequence is that of Large ribosomal subunit protein uL5 from Bordetella bronchiseptica (strain ATCC BAA-588 / NCTC 13252 / RB50) (Alcaligenes bronchisepticus).